Consider the following 179-residue polypeptide: Large ribosomal subunit protein uL6 (179 aa).

It belongs to the universal ribosomal protein uL6 family. As to quaternary structure, part of the 50S ribosomal subunit.

In terms of biological role, this protein binds to the 23S rRNA, and is important in its secondary structure. It is located near the subunit interface in the base of the L7/L12 stalk, and near the tRNA binding site of the peptidyltransferase center. The protein is Large ribosomal subunit protein uL6 of Mycobacterium leprae (strain Br4923).